We begin with the raw amino-acid sequence, 246 residues long: Ribosomal RNA small subunit methyltransferase J (246 aa).

S-adenosyl-L-methionine contacts are provided by residues 115 to 116 (ER) and Asp-169.

Belongs to the methyltransferase superfamily. RsmJ family.

Its subcellular location is the cytoplasm. The catalysed reaction is guanosine(1516) in 16S rRNA + S-adenosyl-L-methionine = N(2)-methylguanosine(1516) in 16S rRNA + S-adenosyl-L-homocysteine + H(+). Specifically methylates the guanosine in position 1516 of 16S rRNA. This Buchnera aphidicola subsp. Acyrthosiphon pisum (strain Tuc7) protein is Ribosomal RNA small subunit methyltransferase J.